The primary structure comprises 340 residues: Anthranilate phosphoribosyltransferase (340 aa).

5-phospho-alpha-D-ribose 1-diphosphate is bound by residues glycine 84, 87 to 88, threonine 92, 94 to 97, 112 to 120, and serine 124; these read GD, NIST, and KHGSRSVSS. An anthranilate-binding site is contributed by glycine 84. Serine 96 is a Mg(2+) binding site. Arginine 170 contacts anthranilate. The Mg(2+) site is built by aspartate 228 and glutamate 229.

This sequence belongs to the anthranilate phosphoribosyltransferase family. As to quaternary structure, homodimer. Requires Mg(2+) as cofactor.

It carries out the reaction N-(5-phospho-beta-D-ribosyl)anthranilate + diphosphate = 5-phospho-alpha-D-ribose 1-diphosphate + anthranilate. It functions in the pathway amino-acid biosynthesis; L-tryptophan biosynthesis; L-tryptophan from chorismate: step 2/5. Functionally, catalyzes the transfer of the phosphoribosyl group of 5-phosphorylribose-1-pyrophosphate (PRPP) to anthranilate to yield N-(5'-phosphoribosyl)-anthranilate (PRA). The protein is Anthranilate phosphoribosyltransferase of Psychromonas ingrahamii (strain DSM 17664 / CCUG 51855 / 37).